The sequence spans 458 residues: Histidine--tRNA ligase (458 aa).

This sequence belongs to the class-II aminoacyl-tRNA synthetase family. In terms of assembly, homodimer.

The protein resides in the cytoplasm. It carries out the reaction tRNA(His) + L-histidine + ATP = L-histidyl-tRNA(His) + AMP + diphosphate + H(+). The sequence is that of Histidine--tRNA ligase from Azobacteroides pseudotrichonymphae genomovar. CFP2.